The chain runs to 315 residues: tRNA dimethylallyltransferase (315 aa).

Residue 13 to 20 (GPTAVGKT) coordinates ATP. A substrate-binding site is contributed by 15–20 (TAVGKT). Positions 38 to 41 (DSRL) are interaction with substrate tRNA.

It belongs to the IPP transferase family. Monomer. Requires Mg(2+) as cofactor.

The enzyme catalyses adenosine(37) in tRNA + dimethylallyl diphosphate = N(6)-dimethylallyladenosine(37) in tRNA + diphosphate. In terms of biological role, catalyzes the transfer of a dimethylallyl group onto the adenine at position 37 in tRNAs that read codons beginning with uridine, leading to the formation of N6-(dimethylallyl)adenosine (i(6)A). The polypeptide is tRNA dimethylallyltransferase (Herpetosiphon aurantiacus (strain ATCC 23779 / DSM 785 / 114-95)).